A 244-amino-acid polypeptide reads, in one-letter code: tRNA pseudouridine synthase A (244 aa).

The active-site Nucleophile is Asp52. Tyr110 serves as a coordination point for substrate.

This sequence belongs to the tRNA pseudouridine synthase TruA family. Homodimer.

The enzyme catalyses uridine(38/39/40) in tRNA = pseudouridine(38/39/40) in tRNA. Functionally, formation of pseudouridine at positions 38, 39 and 40 in the anticodon stem and loop of transfer RNAs. This is tRNA pseudouridine synthase A from Thermoanaerobacter pseudethanolicus (strain ATCC 33223 / 39E) (Clostridium thermohydrosulfuricum).